The sequence spans 236 residues: Lipoprotein NlpE (236 aa).

An N-terminal signal peptide occupies residues 1–20; the sequence is MVKKAIVTAMAVISLFTLMG. Cys-21 carries N-palmitoyl cysteine lipidation. Cys-21 carries S-diacylglycerol cysteine lipidation. Positions 21-100 are N-terminal domain; the sequence is CNNRAEVDTL…WARTADKLVL (80 aa). At 21-236 the chain is on the periplasmic side; it reads CNNRAEVDTL…PNQDCSSLGQ (216 aa). Positions 51 to 54 match the CXXC motif; it reads CADC. Positions 126-236 are C-terminal domain; the sequence is PIESQFNYTL…PNQDCSSLGQ (111 aa). The segment at 144-156 is could contain a copper-binding motif; the sequence is MTPMTLRGMYFYM. Cys-165 and Cys-231 are disulfide-bonded.

Probably exists as a monomer in vivo, can however form homodimers which swap domains. Post-translationally, palmitoylated. Seems to only form a disulfide bond between Cys-165 and Cys-231. The 2 other cysteine residues may however be chemically active.

The protein localises to the cell outer membrane. In terms of biological role, involved in copper homeostasis, could be involved in both copper efflux and the delivery of copper to copper-dependent enzymes. Required for efficient binding of stationary phase cells to hydrophobic surfaces, part of the process of biofilm formation. Functions during envelope stress responses; when overproduced induces degP through the activation of the two-component envelope stress response system CpxA/CpxR. DegP induction seems to require membrane anchoring of this protein. Structural changes and/or interaction of the CXXC motif with its environment may lead to activation of the Cpx stress response. The protein is Lipoprotein NlpE of Escherichia coli (strain K12).